A 195-amino-acid chain; its full sequence is Recombination protein RecR (195 aa).

Residues 54–69 form a C4-type zinc finger; sequence CTICGSYTEDEICSIC. One can recognise a Toprim domain in the interval 77–172; it reads ATICVVGFPQ…NITRLASGLP (96 aa).

Belongs to the RecR family.

Its function is as follows. May play a role in DNA repair. It seems to be involved in an RecBC-independent recombinational process of DNA repair. It may act with RecF and RecO. In Treponema denticola (strain ATCC 35405 / DSM 14222 / CIP 103919 / JCM 8153 / KCTC 15104), this protein is Recombination protein RecR.